The sequence spans 366 residues: Anhydro-N-acetylmuramic acid kinase (366 aa).

Glycine 10–aspartate 17 is a binding site for ATP.

This sequence belongs to the anhydro-N-acetylmuramic acid kinase family.

It carries out the reaction 1,6-anhydro-N-acetyl-beta-muramate + ATP + H2O = N-acetyl-D-muramate 6-phosphate + ADP + H(+). Its pathway is amino-sugar metabolism; 1,6-anhydro-N-acetylmuramate degradation. It participates in cell wall biogenesis; peptidoglycan recycling. Functionally, catalyzes the specific phosphorylation of 1,6-anhydro-N-acetylmuramic acid (anhMurNAc) with the simultaneous cleavage of the 1,6-anhydro ring, generating MurNAc-6-P. Is required for the utilization of anhMurNAc either imported from the medium or derived from its own cell wall murein, and thus plays a role in cell wall recycling. The protein is Anhydro-N-acetylmuramic acid kinase of Legionella pneumophila (strain Lens).